Consider the following 656-residue polypeptide: NADH-ubiquinone oxidoreductase chain 5 (656 aa).

The next 17 membrane-spanning stretches (helical) occupy residues 5–23 (IIIL…GRKL), 30–52 (IITC…EVGF), 81–103 (LTVS…SISY), 112–129 (RFFS…ILVT), 133–155 (YLLM…SFWF), 168–190 (FLTN…WSLG), 200–222 (LAPY…GAMA), 243–262 (VSAL…LLMR), 272–294 (TVLL…VGLF), 301–320 (VIAY…IGLS), 324–346 (IALF…AGSI), 367–389 (PLTY…LTGF), 409–431 (SVYA…VIYL), 452–471 (IFLT…FGYL), 514–536 (FIFT…GSVF), 607–629 (LSTG…FIII), and 634–653 (QISS…SLNF).

The protein belongs to the complex I subunit 5 family.

It localises to the mitochondrion inner membrane. It catalyses the reaction a ubiquinone + NADH + 5 H(+)(in) = a ubiquinol + NAD(+) + 4 H(+)(out). Functionally, core subunit of the mitochondrial membrane respiratory chain NADH dehydrogenase (Complex I) that is believed to belong to the minimal assembly required for catalysis. Complex I functions in the transfer of electrons from NADH to the respiratory chain. The immediate electron acceptor for the enzyme is believed to be ubiquinone. The sequence is that of NADH-ubiquinone oxidoreductase chain 5 (ND5) from Cryphonectria parasitica (Chestnut blight fungus).